A 155-amino-acid chain; its full sequence is Large ribosomal subunit protein eL19 (155 aa).

Residues Val-66–Gly-84 show a composition bias toward basic residues. The tract at residues Val-66 to Val-85 is disordered.

The protein belongs to the eukaryotic ribosomal protein eL19 family. In terms of assembly, part of the 50S ribosomal subunit.

Binds to the 23S rRNA. This Aeropyrum pernix (strain ATCC 700893 / DSM 11879 / JCM 9820 / NBRC 100138 / K1) protein is Large ribosomal subunit protein eL19.